Consider the following 549-residue polypeptide: Vacuolar fusion protein MON1 homolog A (549 aa).

Disordered regions lie at residues 1 to 90 (MAAD…EQIS) and 109 to 137 (EEMRQSQEGKLEPSPQATRHDSVLSGKEE). The segment covering 110-119 (EMRQSQEGKL) has biased composition (basic and acidic residues).

This sequence belongs to the MON1/SAND family.

Its function is as follows. Plays an important role in membrane trafficking through the secretory apparatus. Not involved in endocytic trafficking to lysosomes. In Gallus gallus (Chicken), this protein is Vacuolar fusion protein MON1 homolog A (MON1A).